The chain runs to 354 residues: Membrane progestin receptor alpha-B (354 aa).

Residues 1–76 (MATVVMEQIG…LTLFQRHNES (76 aa)) lie on the Cytoplasmic side of the membrane. A helical membrane pass occupies residues 77 to 97 (VNVWTHLLASLIILVKFQELS). Over 98-110 (ETVDFLRDPHAQP) the chain is Extracellular. The chain crosses the membrane as a helical span at residues 111–131 (MFILLLAAFTYLGCSALAHLL). At 132–141 (SAKSEISHYT) the chain is on the cytoplasmic side. The chain crosses the membrane as a helical span at residues 142–162 (FYFLDYVGVAVYQYGSALAHF). Over 163–175 (YYVVEEEWHAQVR) the chain is Extracellular. A helical transmembrane segment spans residues 176–196 (TFFLPASAFLAWLSCTGCCYG). Residues 197–244 (KYASPKLPKFVHKLFQVVPSGLAYCLDISPVLHRIYRCYSSEHWCADQ) are Cytoplasmic-facing. Residues 245-265 (AVVYHCYQVLFFLISAYFFSY) form a helical membrane-spanning segment. Residues 266–277 (PHPERWFPGRCD) are Extracellular-facing. Residues 278 to 298 (FIGQGHQIFHVFLVLCTLVQI) traverse the membrane as a helical segment. At 299–318 (EAVRLDYTERRRLYEHLHGD) the chain is on the cytoplasmic side. A helical transmembrane segment spans residues 319 to 339 (LAHDAVALFIFTACCSALTAF). Residues 340 to 354 (YVRKRVKTYLEEKQE) lie on the Extracellular side of the membrane.

The protein belongs to the ADIPOR family.

It is found in the cell membrane. Its function is as follows. Steroid membrane receptor. Signals upon progestin binding, resulting in rapid activation of MAPK and down-regulation of adenylyl cyclase activity. Interacts with steroids with varying degrees of affinity, showing specificity for activation by the maturation-inducing steroid (MIS) 4-pregnen-17,20beta-diol-3-one (17,20beta-DHP). Capable of mediating progestin-induced oocyte maturation. The sequence is that of Membrane progestin receptor alpha-B (paqr7b) from Danio rerio (Zebrafish).